We begin with the raw amino-acid sequence, 137 residues long: Large ribosomal subunit protein eL28 (137 aa).

S2 carries the post-translational modification N-acetylserine. Residues K58 and K65 each participate in a glycyl lysine isopeptide (Lys-Gly) (interchain with G-Cter in SUMO2) cross-link. S115 is modified (phosphoserine).

It belongs to the eukaryotic ribosomal protein eL28 family. In terms of assembly, component of the large ribosomal subunit.

Its subcellular location is the cytoplasm. Functionally, component of the large ribosomal subunit. The ribosome is a large ribonucleoprotein complex responsible for the synthesis of proteins in the cell. In Oryctolagus cuniculus (Rabbit), this protein is Large ribosomal subunit protein eL28 (RPL28).